We begin with the raw amino-acid sequence, 89 residues long: Small ribosomal subunit protein uS15 (89 aa).

The protein belongs to the universal ribosomal protein uS15 family. In terms of assembly, part of the 30S ribosomal subunit. Forms a bridge to the 50S subunit in the 70S ribosome, contacting the 23S rRNA.

Functionally, one of the primary rRNA binding proteins, it binds directly to 16S rRNA where it helps nucleate assembly of the platform of the 30S subunit by binding and bridging several RNA helices of the 16S rRNA. In terms of biological role, forms an intersubunit bridge (bridge B4) with the 23S rRNA of the 50S subunit in the ribosome. The polypeptide is Small ribosomal subunit protein uS15 (Leuconostoc mesenteroides subsp. mesenteroides (strain ATCC 8293 / DSM 20343 / BCRC 11652 / CCM 1803 / JCM 6124 / NCDO 523 / NBRC 100496 / NCIMB 8023 / NCTC 12954 / NRRL B-1118 / 37Y)).